Reading from the N-terminus, the 349-residue chain is Paired box protein Pax-4 (349 aa).

The segment at residues 5-131 (GLSSVNQLGG…SSINRVLRAL (127 aa)) is a DNA-binding region (paired). Positions 8 to 64 (SVNQLGGLFVNGRPLPLDTRQQIVQLAIRGMRPCDISRSLKVSNGCVSKILGRYYRT) are PAI subdomain. Residues 83–131 (AVVARIAQLKDEYPALFAWEIQRQLCAEGLCTQDKAPSVSSINRVLRAL) are RED subdomain. The segment at residues 170–229 (SHRNRTIFSPGQAEALEKEFQRGQYPDSVVRGKLAAATSLPEDTVRVWFSNRRAKWRRQE) is a DNA-binding region (homeobox). Residues 278–349 (FCQLCWGAVP…APSTYYLHWP (72 aa)) are transcription repression.

It belongs to the paired homeobox family. Specifically expressed in pancreatic islets.

The protein resides in the nucleus. In terms of biological role, plays an important role in the differentiation and development of pancreatic islet beta cells. Transcriptional repressor that competes with PAX6 in binding to a common element in the glucagon, insulin and somatostatin promoters. The chain is Paired box protein Pax-4 (Pax4) from Rattus norvegicus (Rat).